A 307-amino-acid chain; its full sequence is Acyl transferase (307 aa).

Catalysis depends on charge relay system residues Ser-116, Asp-213, and His-243.

Belongs to the LuxD family.

Its pathway is lipid metabolism; fatty acid reduction for biolumincescence. In terms of biological role, acyl transferase is part of the fatty acid reductase system required for aldehyde biosynthesis; it produces fatty acids for the luminescent reaction. The sequence is that of Acyl transferase from Aliivibrio fischeri (Vibrio fischeri).